The sequence spans 558 residues: Arginine--tRNA ligase (558 aa).

The 'HIGH' region motif lies at 134-144; the sequence is ANPTGPMVLVQ.

This sequence belongs to the class-I aminoacyl-tRNA synthetase family. As to quaternary structure, monomer.

The protein resides in the cytoplasm. It carries out the reaction tRNA(Arg) + L-arginine + ATP = L-arginyl-tRNA(Arg) + AMP + diphosphate. The chain is Arginine--tRNA ligase from Symbiobacterium thermophilum (strain DSM 24528 / JCM 14929 / IAM 14863 / T).